A 263-amino-acid chain; its full sequence is Small ribosomal subunit protein eS4, Y isoform 2 (263 aa).

One can recognise an S4 RNA-binding domain in the interval 42–104; the sequence is LPLIVFLRNR…TGEHFRLVYN (63 aa).

Belongs to the eukaryotic ribosomal protein eS4 family.

This is Small ribosomal subunit protein eS4, Y isoform 2 (RPS4Y2) from Homo sapiens (Human).